A 63-amino-acid chain; its full sequence is SERF-like protein C1705.02 (63 aa).

Over residues 1 to 13 (MSRGNQRDVDRAR) the composition is skewed to basic and acidic residues. A disordered region spans residues 1-63 (MSRGNQRDVD…EANGGSKGKK (63 aa)). Positions 14–24 (NLKKSQASKKK) are enriched in basic residues. Residues 25–35 (QAGDPTKRLEA) are compositionally biased toward basic and acidic residues.

This sequence belongs to the SERF family.

It localises to the cytoplasm. It is found in the nucleus. Its subcellular location is the nucleolus. The polypeptide is SERF-like protein C1705.02 (Schizosaccharomyces pombe (strain 972 / ATCC 24843) (Fission yeast)).